A 428-amino-acid chain; its full sequence is Inward rectifier potassium channel 2 (428 aa).

The Cytoplasmic portion of the chain corresponds to 1 to 81 (MGSVRTNRYS…IFTTCVDIRW (81 aa)). C76 bears the S-nitrosocysteine mark. Residues 82-106 (RWMLVIFCLAFVLSWLFFGCVFWLI) traverse the membrane as a helical segment. The Extracellular segment spans residues 107 to 128 (ALLHGDLDTSKVSKACVSEVNS). Positions 129-140 (FTAAFLFSIETQ) form an intramembrane region, helical; Pore-forming. Residues 141-147 (TTIGYGF) constitute an intramembrane region (pore-forming). The short motif at 142–147 (TIGYGF) is the Selectivity filter element. The Extracellular portion of the chain corresponds to 148-156 (RCVTDECPI). A helical transmembrane segment spans residues 157-178 (AVFMVVFQSIVGCIIDAFIIGA). Residues 179-428 (VMAKMAKPKK…PRPLRRESEI (250 aa)) are Cytoplasmic-facing. Positions 181 to 208 (AKMAKPKKRNETLVFSHNAVIAMRDGKL) are polyphosphoinositide (PIP2)-binding. The tract at residues 383–428 (TSKEEEEDSENGVPESTSTDSPPGIDLHNQASVPLEPRPLRRESEI) is disordered. The PDZ-binding signature appears at 426–428 (SEI).

It belongs to the inward rectifier-type potassium channel (TC 1.A.2.1) family. KCNJ2 subfamily. In terms of assembly, homotetramer. Homomultimeric and heteromultimeric association with KCNJ4/Kir2.3. Can form heteromeric channels with Kir2.6/KCNJ18. Associates, via its PDZ-recognition domain, with a complex containing LIN7A, LIN7B, LIN7C, DLG1, CASK and APBA1. In terms of processing, S-nitrosylation increases the open probability and inward rectifying currents. As to expression, prominently expressed in the central nervous system. Also found in other excitable tissues such as heart and skeletal muscle.

It localises to the cell membrane. The protein localises to the sarcolemma. Its subcellular location is the T-tubule. The enzyme catalyses K(+)(in) = K(+)(out). Its activity is regulated as follows. Activated by phosphatidylinositol 4,5 biphosphate (PtdIns(4,5)P2). Functionally, inward rectifier potassium channels are characterized by a greater tendency to allow potassium to flow into the cell rather than out of it. Their voltage dependence is regulated by the concentration of extracellular potassium; as external potassium is raised, the voltage range of the channel opening shifts to more positive voltages. The inward rectification is mainly due to the blockage of outward current by internal magnesium. Can be blocked by extracellular barium and cesium. Probably participates in establishing action potential waveform and excitability of neuronal and muscle tissues. This chain is Inward rectifier potassium channel 2 (Kcnj2), found in Mus musculus (Mouse).